Consider the following 347-residue polypeptide: Methionine import ATP-binding protein MetN (347 aa).

The ABC transporter domain occupies 2-247; the sequence is ITTTGLTKVY…PGSELASALF (246 aa). 38–45 contributes to the ATP binding site; sequence GQSGAGKS.

Belongs to the ABC transporter superfamily. Methionine importer (TC 3.A.1.24) family. As to quaternary structure, the complex is composed of two ATP-binding proteins (MetN), two transmembrane proteins (MetI) and a solute-binding protein (MetQ).

It localises to the cell membrane. It carries out the reaction L-methionine(out) + ATP + H2O = L-methionine(in) + ADP + phosphate + H(+). It catalyses the reaction D-methionine(out) + ATP + H2O = D-methionine(in) + ADP + phosphate + H(+). In terms of biological role, part of the ABC transporter complex MetNIQ involved in methionine import. Responsible for energy coupling to the transport system. The protein is Methionine import ATP-binding protein MetN of Streptomyces avermitilis (strain ATCC 31267 / DSM 46492 / JCM 5070 / NBRC 14893 / NCIMB 12804 / NRRL 8165 / MA-4680).